A 700-amino-acid polypeptide reads, in one-letter code: AP-2 complex subunit beta (700 aa).

Positions 625–700 (VGNSFPPTGA…RKLSMKRPFS (76 aa)) are disordered. S649 is subject to Phosphoserine. T652 is subject to Phosphothreonine. The segment covering 653 to 663 (AMMDDYDKPAE) has biased composition (basic and acidic residues). S683 is modified (phosphoserine).

The protein belongs to the adaptor complexes large subunit family. Adaptor protein complex 2 (AP-2) is a heterotetramer composed of two large adaptins (alpha-type subunit APL3 and beta-type subunit APL1), a medium chain (mu-type subunit APM4) and a small adaptin (sigma-type subunit APS2). Interacts with APS2.

It localises to the cell membrane. Its subcellular location is the membrane. The protein resides in the coated pit. In terms of biological role, adaptins are components of the adaptor complexes which link clathrin to receptors in coated vesicles. Clathrin-associated protein complexes are believed to interact with the cytoplasmic tails of membrane proteins, leading to their selection and concentration. Beta adaptin is a subunit of the plasma membrane adaptor. This Saccharomyces cerevisiae (strain ATCC 204508 / S288c) (Baker's yeast) protein is AP-2 complex subunit beta (APL1).